The sequence spans 829 residues: Periplasmic nitrate reductase (829 aa).

Positions 1-30 form a signal peptide, tat-type signal; it reads MKMTRRAFVKANAAASAAAVAGITLPASAA. The 4Fe-4S Mo/W bis-MGD-type domain maps to 41–97; sequence ITWDKAPCRFCGTGCSVLVGTQNGKVVATQGDPEAPVNKGLNCIKGYFLSKIMYGQD. The [4Fe-4S] cluster site is built by cysteine 48, cysteine 51, cysteine 55, and cysteine 83. Residues lysine 85, glutamine 152, asparagine 177, cysteine 181, 214 to 221, 245 to 249, 264 to 266, methionine 374, glutamine 378, asparagine 484, 510 to 511, lysine 533, aspartate 560, and 718 to 727 contribute to the Mo-bis(molybdopterin guanine dinucleotide) site; these read WGSNMAEM, STYYH, QSD, SD, and TGRVLEHWHT. Phenylalanine 794 contributes to the substrate binding site. Mo-bis(molybdopterin guanine dinucleotide)-binding residues include asparagine 802 and lysine 819.

Belongs to the prokaryotic molybdopterin-containing oxidoreductase family. NasA/NapA/NarB subfamily. As to quaternary structure, component of the periplasmic nitrate reductase NapAB complex composed of NapA and NapB. [4Fe-4S] cluster serves as cofactor. Requires Mo-bis(molybdopterin guanine dinucleotide) as cofactor. Post-translationally, predicted to be exported by the Tat system. The position of the signal peptide cleavage has not been experimentally proven.

It is found in the periplasm. The catalysed reaction is 2 Fe(II)-[cytochrome] + nitrate + 2 H(+) = 2 Fe(III)-[cytochrome] + nitrite + H2O. In terms of biological role, catalytic subunit of the periplasmic nitrate reductase complex NapAB. Receives electrons from NapB and catalyzes the reduction of nitrate to nitrite. This is Periplasmic nitrate reductase from Vibrio vulnificus (strain CMCP6).